A 542-amino-acid chain; its full sequence is Probable spastin homolog spas-1 (542 aa).

Residues 29-66 adopt a coiled-coil conformation; sequence RAAIEMDELTKQNGTINEKLQTAELYKQARQMLKEANE. The segment at 131 to 177 is disordered; sequence ATVPGDKKVSKVKQTEKAPHVCSRGDRCGAHQPPPEKKSTPLKPVNQ. Basic and acidic residues predominate over residues 135 to 169; the sequence is GDKKVSKVKQTEKAPHVCSRGDRCGAHQPPPEKKS. 309-316 provides a ligand contact to ATP; it reads GPPGNGKT.

The protein belongs to the AAA ATPase family. Spastin subfamily. As to quaternary structure, homohexamer. The homohexamer is stabilized by ATP-binding. The homohexamer may adopt a ring conformation through which microtubules pass prior to being severed. Interacts with microtubules.

It is found in the cytoplasm. The protein localises to the cytoskeleton. Its subcellular location is the perinuclear region. It catalyses the reaction n ATP + n H2O + a microtubule = n ADP + n phosphate + (n+1) alpha/beta tubulin heterodimers.. Its function is as follows. Severs microtubules, probably in an ATP-dependent fashion. This Caenorhabditis briggsae protein is Probable spastin homolog spas-1 (spas-1).